The primary structure comprises 631 residues: ATP-dependent protease PrkA (631 aa).

Thr-217 is subject to Phosphothreonine. A Phosphoserine modification is found at Ser-219.

This sequence belongs to the PrkA family. Post-translationally, phosphorylated by PrkC on two sites, Thr-217 and Ser-219, with the threonine being the major site of modification.

It localises to the forespore. It is found in the spore coat. The enzyme catalyses Hydrolysis of proteins in presence of ATP.. Its activity is regulated as follows. Hydrolase activity is regulated by phosphorylation by the Ser/Thr kinase PrkC, probably allowing fine control of sporulation. Phosphorylation by PrkC does not prevent ATP fixation but it inhibits specifically PrkA protease activity and down-regulates the sporulation processes. Hydrolase activity is inhibited by a protease inhibitor, phenylmethylsulfonyl fluoride (PMSF). Potential kinase activity requires the presence of MgCl(2) and is inhibited in the presence of MnCl(2). In terms of biological role, ATP-dependent protease that regulates sporulation. Is able to bind and hydrolyze ATP. This ATP-dependent protease activity is necessary for efficient sporulation of B.subtilis. In vitro, can hydrolyze alpha-casein, an exogenous substrate of Lon proteases, in an ATP-dependent manner. PrkA also modulates sporulation by negatively regulating the transcriptional regulator Hpr/ScoC to induce the expression of sigK. The control of sporulation mediated via the Hpr/ScoC regulator is probably indirect. PrkA was originally thought to be a protein kinase, as it has been shown to phosphorylate in vitro an unidentified 60 kDa protein from B.subtilis crude extracts at a serine residue. However, Zhang et al. did not observe autophosphorylation or kinase activity for this protein, suggesting that it may have lost its kinase activity during evolution or may be a pseudokinase. The sequence is that of ATP-dependent protease PrkA from Bacillus subtilis (strain 168).